Consider the following 122-residue polypeptide: Large ribosomal subunit protein uL14 (122 aa).

Belongs to the universal ribosomal protein uL14 family. In terms of assembly, part of the 50S ribosomal subunit. Forms a cluster with proteins L3 and L19. In the 70S ribosome, L14 and L19 interact and together make contacts with the 16S rRNA in bridges B5 and B8.

In terms of biological role, binds to 23S rRNA. Forms part of two intersubunit bridges in the 70S ribosome. This Paenarthrobacter aurescens (strain TC1) protein is Large ribosomal subunit protein uL14.